A 1188-amino-acid polypeptide reads, in one-letter code: uncharacterized protein (1188 aa).

4 disordered regions span residues 126–468 (GDLR…SQME), 484–771 (EDRF…LYKP), 790–823 (ARGG…TDEL), and 847–1039 (QRAQ…FSRF). Composition is skewed to pro residues over residues 139-151 (IPPP…PGPP), 159-193 (GGSP…PPPV), and 208-240 (IPTP…PAPA). Ser260 is subject to Phosphoserine. Basic and acidic residues predominate over residues 322–331 (EAPRKEEGAT). A compositionally biased stretch (pro residues) spans 389-418 (TPPPAPPLPPPAPPLPPPAPPLPPAAPPLP). Residues 432 to 441 (KTPKSSSPAL) are compositionally biased toward low complexity. Composition is skewed to basic and acidic residues over residues 501 to 514 (KEGK…EKET) and 566 to 583 (IRNE…KEAK). Over residues 618 to 633 (LPPQSTTLLPTTSLQP) the composition is skewed to low complexity. Pro residues predominate over residues 640 to 652 (AIPPKATPEPAIP). Thr666 is subject to Phosphothreonine. Low complexity predominate over residues 689–703 (PAIASTATTLPTTTS). Over residues 875–893 (AEASSDSIFHSQGTPNSFT) the composition is skewed to polar residues. Residues 920–931 (LGRDAEGTELSR) are compositionally biased toward basic and acidic residues. A compositionally biased stretch (pro residues) spans 986 to 1001 (IPPPPEFSNDPEPPAP). The span at 1007 to 1019 (GRQSSPPRNNYSD) shows a compositional bias: polar residues. The span at 1026–1035 (AGPGAPPALG) shows a compositional bias: low complexity. Arg1044 is subject to Asymmetric dimethylarginine. The segment at 1069-1160 (GEPHRGPGLP…SPYTTTRYGS (92 aa)) is disordered. Omega-N-methylarginine is present on residues Arg1073 and Arg1084. Position 1157 is an asymmetric dimethylarginine (Arg1157).

This is an uncharacterized protein from Homo sapiens (Human).